A 526-amino-acid chain; its full sequence is Na(+)/H(+) antiporter NhaB (526 aa).

The next 13 membrane-spanning stretches (helical) occupy residues 14-34 (FLGY…LINP), 35-55 (LLFY…EFIF), 99-119 (MLLV…LFVF), 122-142 (LLLR…AAAF), 146-166 (FLDA…FYGI), 206-226 (LMMH…VGEP), 239-259 (FVDF…CGIL), 307-327 (AVIG…VGLI), 328-348 (GLSV…HAIG), 357-377 (FTAL…QQLF), 397-417 (YLFN…SVYI), 451-471 (ATPN…APLI), and 479-499 (VIMA…CVEF).

The protein belongs to the NhaB Na(+)/H(+) (TC 2.A.34) antiporter family.

It is found in the cell inner membrane. The enzyme catalyses 2 Na(+)(in) + 3 H(+)(out) = 2 Na(+)(out) + 3 H(+)(in). Its function is as follows. Na(+)/H(+) antiporter that extrudes sodium in exchange for external protons. The polypeptide is Na(+)/H(+) antiporter NhaB (Pectobacterium atrosepticum (strain SCRI 1043 / ATCC BAA-672) (Erwinia carotovora subsp. atroseptica)).